Reading from the N-terminus, the 95-residue chain is Aspartyl/glutamyl-tRNA(Asn/Gln) amidotransferase subunit C (95 aa).

Belongs to the GatC family. Heterotrimer of A, B and C subunits.

It carries out the reaction L-glutamyl-tRNA(Gln) + L-glutamine + ATP + H2O = L-glutaminyl-tRNA(Gln) + L-glutamate + ADP + phosphate + H(+). The catalysed reaction is L-aspartyl-tRNA(Asn) + L-glutamine + ATP + H2O = L-asparaginyl-tRNA(Asn) + L-glutamate + ADP + phosphate + 2 H(+). Its function is as follows. Allows the formation of correctly charged Asn-tRNA(Asn) or Gln-tRNA(Gln) through the transamidation of misacylated Asp-tRNA(Asn) or Glu-tRNA(Gln) in organisms which lack either or both of asparaginyl-tRNA or glutaminyl-tRNA synthetases. The reaction takes place in the presence of glutamine and ATP through an activated phospho-Asp-tRNA(Asn) or phospho-Glu-tRNA(Gln). The chain is Aspartyl/glutamyl-tRNA(Asn/Gln) amidotransferase subunit C from Trichlorobacter lovleyi (strain ATCC BAA-1151 / DSM 17278 / SZ) (Geobacter lovleyi).